The following is a 428-amino-acid chain: Enolase (428 aa).

Glutamine 163 provides a ligand contact to (2R)-2-phosphoglycerate. The active-site Proton donor is the glutamate 205. 3 residues coordinate Mg(2+): aspartate 242, glutamate 286, and aspartate 313. (2R)-2-phosphoglycerate is bound by residues lysine 338, arginine 367, serine 368, and lysine 389. Lysine 338 functions as the Proton acceptor in the catalytic mechanism.

This sequence belongs to the enolase family. The cofactor is Mg(2+).

The protein localises to the cytoplasm. The protein resides in the secreted. It localises to the cell surface. The catalysed reaction is (2R)-2-phosphoglycerate = phosphoenolpyruvate + H2O. The protein operates within carbohydrate degradation; glycolysis; pyruvate from D-glyceraldehyde 3-phosphate: step 4/5. Its function is as follows. Catalyzes the reversible conversion of 2-phosphoglycerate (2-PG) into phosphoenolpyruvate (PEP). It is essential for the degradation of carbohydrates via glycolysis. The polypeptide is Enolase (Bordetella bronchiseptica (strain ATCC BAA-588 / NCTC 13252 / RB50) (Alcaligenes bronchisepticus)).